A 387-amino-acid chain; its full sequence is L-aspartate:5-guanidino-3-methyl-2-oxopentanoate transaminase (387 aa).

Position 237 is an N6-(pyridoxal phosphate)lysine (lysine 237).

It belongs to the class-I pyridoxal-phosphate-dependent aminotransferase family. Pyridoxal 5'-phosphate serves as cofactor.

It catalyses the reaction (3R)-5-guanidino-3-methyl-2-oxopentanoate + L-aspartate = (3R)-3-methyl-L-arginine + oxaloacetate. Its pathway is antibiotic biosynthesis. Its function is as follows. Aminotransferase involved in the formation of the rare amino acid 3-methylarginine (MeArg), which is used as a potent antibiotic against the closely related soybean pathogen P.syringae pv. glycinea. Probably catalyzes transamination from the donor L-aspartate to 5-guanidino-3-methyl-2-oxopentanoic acid, generating 3-methylarginine. This chain is L-aspartate:5-guanidino-3-methyl-2-oxopentanoate transaminase, found in Pseudomonas syringae pv. syringae.